The sequence spans 200 residues: Small ribosomal subunit protein mS38 (200 aa).

It belongs to the mitochondrion-specific ribosomal protein mS38 family. In terms of assembly, component of the mitochondrial ribosome small subunit (28S) which comprises a 12S rRNA and about 30 distinct proteins. Interacts with Aurora-A. Ubiquitously expressed and especially highly expressed in heart, skeletal muscle and testis.

The protein resides in the mitochondrion matrix. The protein localises to the nucleus. May act as a negative regulator of Aurora-A kinase, by down-regulation through proteasome-dependent degradation. In Mus musculus (Mouse), this protein is Small ribosomal subunit protein mS38 (Aurkaip1).